The primary structure comprises 308 residues: Staphylococcal superantigen-like 4 (308 aa).

Positions 1 to 30 are cleaved as a signal peptide; the sequence is MKITTIAKTSLALGLLTTGVITTTTQAANA. The disordered stretch occupies residues 28-117; the sequence is ANATTPSSTK…TTKQVPTEIN (90 aa). Polar residues-rich tracts occupy residues 33–47 and 55–76; these read PSSTKVEAPQSTPPS and SKPNATTPPSTKVEAPQQTANA. A compositionally biased stretch (low complexity) spans 77 to 93; the sequence is TTPPSTKVTTPPSTNTP. Residues 94-114 show a composition bias toward polar residues; it reads QPMQSTKSDTPQSPTTKQVPT. Residues 180–278 form a sialyl Lewis X-binding region; it reads VDVFVVLEEN…VIKMKNGGKY (99 aa).

It belongs to the staphylococcal/streptococcal toxin family.

It localises to the secreted. In terms of biological role, secreted protein that plays a role in immune innate response inhibition by interfering with host TLR2-mediated pathway. The sequence is that of Staphylococcal superantigen-like 4 from Staphylococcus aureus (strain Newman).